We begin with the raw amino-acid sequence, 571 residues long: Sporulation-specific protein 1 (571 aa).

Disordered stretches follow at residues 1–53, 67–133, and 482–501; these read MRSS…EEDV, MTAF…PYRQ, and KEAK…SQPE. Residues 23 to 37 show a composition bias toward basic residues; that stretch reads SKQKKPTKFRERMRR. Polar residues-rich tracts occupy residues 67 to 86, 95 to 121, and 486 to 499; these read MTAF…NNFF, PVQS…QNPK, and NISS…SISQ. 2 coiled-coil regions span residues 469–486 and 542–566; these read DQLV…EAKN and ESAS…DENV.

In terms of assembly, interacts directly with ADY3. Probable component of a spindle pole body (SPB) complex composed of ADY3, SSP1, DON1, MPC54, SPO21/MPC70, NUD1 and CNM67. Phosphorylated.

Its subcellular location is the prospore membrane. Functionally, involved in the pathway that organizes the shaping and sizing of the prospore membrane (PSM) during sporulation. May be required for the formation of ADY3 and DON1-containing protein coats at the leading edge of the PSMs during meiosis II. This Saccharomyces cerevisiae (strain ATCC 204508 / S288c) (Baker's yeast) protein is Sporulation-specific protein 1 (SSP1).